The primary structure comprises 363 residues: MSSESTVIKVTGKSAADNYDVVVGRGLLGRLPELLGERVKRVLVIHPRALRLTGDTVRDELASAGFTALTAEIPDAEEGKHIQVAAFCWQVLGQNDFTRSDAVVAVGGGAVTDLAGFVAATWLRGVKVIHMPTSLLGMVDASVGGKTGINTAEGKNLVGAFHPPAAVLADLDTLSTLPKNELISGMAEVIKCGFIADPAILDLVEKDPSAVTDPQSAFLRELIERAIAVKADVVSEDLKETGRREILNYGHTLGHAIELVERYSWRHGAAVSVGMMFAAELARSVGRLSDADADRHRTILETLGLPITYRRDRWQGLLDGMRRDKKSRGDLLRFVVLDGIARPGILDVPDTSLLFAAYQEIAS.

NAD(+) contacts are provided by residues 75-80 (DAEEGK), 109-113 (GAVTD), 133-134 (TS), Lys-146, Lys-155, and 173-176 (TLST). Zn(2+) contacts are provided by Glu-188, His-251, and His-267.

It belongs to the sugar phosphate cyclases superfamily. Dehydroquinate synthase family. The cofactor is Co(2+). Zn(2+) is required as a cofactor. It depends on NAD(+) as a cofactor.

It is found in the cytoplasm. It catalyses the reaction 7-phospho-2-dehydro-3-deoxy-D-arabino-heptonate = 3-dehydroquinate + phosphate. The protein operates within metabolic intermediate biosynthesis; chorismate biosynthesis; chorismate from D-erythrose 4-phosphate and phosphoenolpyruvate: step 2/7. Catalyzes the conversion of 3-deoxy-D-arabino-heptulosonate 7-phosphate (DAHP) to dehydroquinate (DHQ). The protein is 3-dehydroquinate synthase of Arthrobacter sp. (strain FB24).